The sequence spans 172 residues: MSNPKVFFDMAIAGNPAGRIVMELYADTTPRTAENFRALCTGEKGVGRSGKPLHYKGSTFHRVIPNFMCQGGDFTAGNGTGAESIYGAKFADENFIKRHTGPGILSMANAGAGTNGSQFFICTEKTEWLDGKHVVFGKVIEGMNVVRDIEKVGSGSGKTSRPVTIADCGQLS.

In terms of domain architecture, PPIase cyclophilin-type spans phenylalanine 7–glutamine 170.

This sequence belongs to the cyclophilin-type PPIase family. In terms of tissue distribution, expressed in meristematic tissues, with higher levels in nodules.

Its subcellular location is the cytoplasm. The enzyme catalyses [protein]-peptidylproline (omega=180) = [protein]-peptidylproline (omega=0). Binds cyclosporin A (CsA). CsA mediates some of its effects via an inhibitory action on PPIase. In terms of biological role, PPIases accelerate the folding of proteins. It catalyzes the cis-trans isomerization of proline imidic peptide bonds in oligopeptides. The chain is Peptidyl-prolyl cis-trans isomerase from Lupinus luteus (European yellow lupine).